Here is a 210-residue protein sequence, read N- to C-terminus: FMN-dependent NADH:quinone oxidoreductase 9 (210 aa).

FMN contacts are provided by residues serine 10 and serine 16–serine 18.

Belongs to the azoreductase type 1 family. As to quaternary structure, homodimer. FMN is required as a cofactor.

It carries out the reaction 2 a quinone + NADH + H(+) = 2 a 1,4-benzosemiquinone + NAD(+). The catalysed reaction is N,N-dimethyl-1,4-phenylenediamine + anthranilate + 2 NAD(+) = 2-(4-dimethylaminophenyl)diazenylbenzoate + 2 NADH + 2 H(+). Its function is as follows. Quinone reductase that provides resistance to thiol-specific stress caused by electrophilic quinones. Also exhibits azoreductase activity. Catalyzes the reductive cleavage of the azo bond in aromatic azo compounds to the corresponding amines. The protein is FMN-dependent NADH:quinone oxidoreductase 9 of Burkholderia lata (strain ATCC 17760 / DSM 23089 / LMG 22485 / NCIMB 9086 / R18194 / 383).